Consider the following 257-residue polypeptide: Zinc uptake system ATP-binding protein ZurA (257 aa).

Residues 5 to 241 (IEVNNVSYHY…ADRELEILAE (237 aa)) form the ABC transporter domain. An ATP-binding site is contributed by 37–44 (GPNGSGKS).

Belongs to the ABC transporter superfamily.

Functionally, involved in a zinc uptake transport system. This chain is Zinc uptake system ATP-binding protein ZurA (zurA), found in Listeria monocytogenes serovar 1/2a (strain ATCC BAA-679 / EGD-e).